Consider the following 367-residue polypeptide: Peptide chain release factor 2 (367 aa).

Glutamine 254 bears the N5-methylglutamine mark.

The protein belongs to the prokaryotic/mitochondrial release factor family. In terms of processing, methylated by PrmC. Methylation increases the termination efficiency of RF2.

It is found in the cytoplasm. Its function is as follows. Peptide chain release factor 2 directs the termination of translation in response to the peptide chain termination codons UGA and UAA. In Leptospira interrogans serogroup Icterohaemorrhagiae serovar copenhageni (strain Fiocruz L1-130), this protein is Peptide chain release factor 2.